Reading from the N-terminus, the 463-residue chain is Elongation factor 1-alpha 2 (463 aa).

The residue at position 2 (G2) is a N,N,N-trimethylglycine. One can recognise a tr-type G domain in the interval K5–T242. A G1 region spans residues G14 to S21. GTP-binding residues include D17, S18, G19, K20, S21, and T22. D17 provides a ligand contact to Mg(2+). The residue at position 36 (K36) is an N6,N6,N6-trimethyllysine; alternate. Residue K36 is modified to N6,N6-dimethyllysine; alternate. K36 carries the N6-methyllysine; alternate modification. At K55 the chain carries N6,N6,N6-trimethyllysine. An N6,N6-dimethyllysine modification is found at K55. The tract at residues G70–D74 is G2. K79 carries the N6,N6,N6-trimethyllysine modification. The interval D91 to G94 is G3. GTP-binding residues include N153, K154, and D156. Residues N153–D156 form a G4 region. A Phosphoserine modification is found at S163. Residue K165 is modified to N6,N6-dimethyllysine; alternate. K165 bears the N6-methyllysine; alternate mark. Residue K165 is modified to N6,N6,N6-trimethyllysine; alternate; by EEF1AKMT3. K179 carries the N6-acetyllysine modification. Positions 194, 195, and 196 each coordinate GTP. Residues S194–W196 are G5. A Phosphoserine modification is found at S224. Phosphothreonine is present on T239. 5-glutamyl glycerylphosphorylethanolamine is present on residues E301 and E374. K439 carries the post-translational modification N6-acetyllysine. The interval K444 to K463 is disordered.

Belongs to the TRAFAC class translation factor GTPase superfamily. Classic translation factor GTPase family. EF-Tu/EF-1A subfamily. As to quaternary structure, homodimer; arranged in a 'head to tail' dimer configuration. In terms of processing, trimethylated at Lys-165 by EEF1AKMT3. Mono-, di-, and trimethylated at Lys-36 by EEF1AKMT4; trimethylated form is predominant. Methylation by EEF1AKMT4 contributes to the fine-tuning of translation rates for a subset of tRNAs. Trimethylated at the N-terminus and dimethylated at Lys-55 by METTL13.

It is found in the endoplasmic reticulum membrane. The enzyme catalyses GTP + H2O = GDP + phosphate + H(+). Functionally, translation elongation factor that catalyzes the GTP-dependent binding of aminoacyl-tRNA (aa-tRNA) to the A-site of ribosomes during the elongation phase of protein synthesis. Base pairing between the mRNA codon and the aa-tRNA anticodon promotes GTP hydrolysis, releasing the aa-tRNA from EEF1A1 and allowing its accommodation into the ribosome. The growing protein chain is subsequently transferred from the P-site peptidyl tRNA to the A-site aa-tRNA, extending it by one amino acid through ribosome-catalyzed peptide bond formation. This is Elongation factor 1-alpha 2 (EEF1A2) from Bos taurus (Bovine).